The sequence spans 257 residues: Spermidine/putrescine transport system permease protein PotC (257 aa).

Residues 1 to 7 (MSRFFLR) are Cytoplasmic-facing. The chain crosses the membrane as a helical span at residues 8 to 27 (NAFMFVVYAYLYIPIIILVT). Topologically, residues 28–65 (NSFNKDRYGLSWKGFSWNWYERLFNNDTLIQAAIHSVT) are periplasmic. The ABC transmembrane type-1 domain maps to 60–248 (AIHSVTIAFF…VLSLALVVLS (189 aa)). The chain crosses the membrane as a helical span at residues 66–85 (IAFFAATLATIVGGLTAIAL). Over 86–100 (YRYRFRGKQAVSGML) the chain is Cytoplasmic. A helical transmembrane segment spans residues 101-120 (FIVMMSPDIVMAVSLLALFM). Residues 121–128 (VVGISLGF) lie on the Periplasmic side of the membrane. A helical transmembrane segment spans residues 129–148 (WSLLLAHVTFCLPYVTVTIF). Residues 149-176 (SRLNGFDSRMLEAAKDLGASEVTILRKI) are Cytoplasmic-facing. Residues 177–196 (ILPLALPAVVSGWLLSFTIS) traverse the membrane as a helical segment. Topologically, residues 197-231 (LDDVVVSSFVSGVSYEILPLRIFSLVKTGVTPEVN) are periplasmic. Residues 232–251 (ALATIMIVLSLALVVLSQLI) form a helical membrane-spanning segment. Over 252–257 (TRKNNH) the chain is Cytoplasmic.

It belongs to the binding-protein-dependent transport system permease family. CysTW subfamily.

The protein localises to the cell inner membrane. In terms of biological role, required for the activity of the bacterial periplasmic transport system of putrescine and spermidine. This is Spermidine/putrescine transport system permease protein PotC (potC) from Haemophilus influenzae (strain ATCC 51907 / DSM 11121 / KW20 / Rd).